A 2515-amino-acid chain; its full sequence is Protein tudor (2515 aa).

Residues serine 226, serine 235, and serine 239 each carry the phosphoserine modification. Tudor domains are found at residues 455–513 and 641–696; these read APEL…LLEI and QLIL…HLEM. Serine 800 is modified (phosphoserine). The segment at 840-996 is disordered; that stretch reads QAVKSVSGSK…SSSESVAAAK (157 aa). Positions 890 to 900 are enriched in low complexity; that stretch reads STGSYSSGMSS. Positions 906 to 917 are enriched in polar residues; the sequence is RQQNGRTPIQSP. Basic and acidic residues predominate over residues 918-927; that stretch reads RHNEKQEAKK. Composition is skewed to polar residues over residues 943–954 and 964–976; these read GQQGNQRSQNAP and QKST…SSKR. The segment covering 977-995 has biased composition (low complexity); it reads SSGVGSDIASSSSESVAAA. Tudor domains lie at 1062–1122 and 1355–1414; these read QLKV…FADP and KFDV…FYEH. Positions 1515-1589 are disordered; sequence EEDKGRKETV…KPATPVPEVV (75 aa). Residues 1540–1553 are compositionally biased toward basic and acidic residues; that stretch reads NDKDREPKKSKPAE. The segment covering 1569–1584 has biased composition (pro residues); the sequence is SPVPAEPAPVPKPATP. 5 consecutive Tudor domains span residues 1662–1718, 1839–1898, 2023–2082, 2211–2269, and 2392–2451; these read NVVN…SHIE, GFEK…SLPS, KAAV…LIKP, TTNS…PIPS, and DLKE…KPAR.

May form part of a piRNA processing complex consisting of tud, aub and AGO3. Interacts with AGO3 (when symmetrically dimethylated on Arg residues) and aub (when symmetrically dimethylated on Arg residues). Interacts with vls. Interacts with me31B/DDX6 (when symmetrically dimethylated on Arg residues).

The protein resides in the cytoplasm. It is found in the perinuclear region. It localises to the cytoplasmic ribonucleoprotein granule. Functionally, may act via the Piwi-interacting RNA (piRNA) metabolic process mediated by aub and AGO3 Piwi proteins, which mediates the repression of transposable elements during meiosis by forming complexes composed of piRNAs and Piwi proteins and governs the methylation and subsequent repression of transposons. Required during oogenesis for the formation of primordial germ cells and for normal abdominal segmentation. Not involved in repression of retroelements. In Drosophila melanogaster (Fruit fly), this protein is Protein tudor.